We begin with the raw amino-acid sequence, 178 residues long: Prion-like protein doppel (178 aa).

Residues 1-25 (MRKHLGGCWLAIVCILLFSQLCSVK) form the signal peptide. Residues 27–50 (RGIKHRIKWNRKVLPSTSQVTEAR) are flexible tail. Residues 51–154 (TAEIRPGAFI…KHCDFWLERG (104 aa)) form a globular region. 2 disulfide bridges follow: Cys94/Cys147 and Cys108/Cys142. 2 N-linked (GlcNAc...) asparagine glycosylation sites follow: Asn98 and Asn110. A cu(2+) binding region spans residues 124-141 (KQDNKLYQRVLWQLIREL). Gly154 carries the GPI-anchor amidated glycine lipid modification. Residues 155 to 178 (AGLRVTLDQPMMLCLLVFIWFIVK) constitute a propeptide, removed in mature form.

This sequence belongs to the prion family. In terms of processing, N-glycosylated. Post-translationally, O-glycosylated. Strongly expressed in testis. Detected at low levels in ovary, spleen, kidney and mammary gland.

The protein resides in the cell membrane. Its function is as follows. Required for normal acrosome reaction and for normal male fertility. Can bind Cu(2+). This chain is Prion-like protein doppel (PRND), found in Bos taurus (Bovine).